We begin with the raw amino-acid sequence, 247 residues long: Sulfate transporter CysZ (247 aa).

5 helical membrane passes run 29-49 (FVVL…FYLF), 66-86 (FLSW…LATF), 141-160 (LLYI…IPAL), 164-186 (VGPV…DYPF), and 212-232 (VLVS…PVAI).

The protein belongs to the CysZ family.

Its subcellular location is the cell inner membrane. Functionally, high affinity, high specificity proton-dependent sulfate transporter, which mediates sulfate uptake. Provides the sulfur source for the cysteine synthesis pathway. The protein is Sulfate transporter CysZ of Vibrio parahaemolyticus serotype O3:K6 (strain RIMD 2210633).